The sequence spans 301 residues: UDP-N-acetylenolpyruvoylglucosamine reductase (301 aa).

An FAD-binding PCMH-type domain is found at 30 to 194 (VGGEADYLVF…LSVKFALAPG (165 aa)). Residue arginine 173 is part of the active site. The active-site Proton donor is serine 223. The active site involves glutamate 293.

The protein belongs to the MurB family. It depends on FAD as a cofactor.

The protein resides in the cytoplasm. It carries out the reaction UDP-N-acetyl-alpha-D-muramate + NADP(+) = UDP-N-acetyl-3-O-(1-carboxyvinyl)-alpha-D-glucosamine + NADPH + H(+). Its pathway is cell wall biogenesis; peptidoglycan biosynthesis. Functionally, cell wall formation. In Streptococcus pneumoniae (strain Hungary19A-6), this protein is UDP-N-acetylenolpyruvoylglucosamine reductase.